The following is a 353-amino-acid chain: rRNA methyltransferase 1, mitochondrial (353 aa).

The N-terminal 20 residues, 1 to 20 (MALLSTVRGATWGRLVTRHF), are a transit peptide targeting the mitochondrion. The tract at residues 311–353 (PTEGERRQLLQDPQEPSARSEGLSMAQHPGLSSGPEKERQNEG) is disordered.

The protein belongs to the class IV-like SAM-binding methyltransferase superfamily. RNA methyltransferase TrmH family.

It is found in the mitochondrion matrix. The catalysed reaction is guanosine(1145) in 16S rRNA + S-adenosyl-L-methionine = 2'-O-methylguanosine(1145) in 16S rRNA + S-adenosyl-L-homocysteine + H(+). In terms of biological role, S-adenosyl-L-methionine-dependent 2'-O-ribose methyltransferase that catalyzes the formation of 2'-O-methylguanosine at position 1145 (Gm1145) in the 16S mitochondrial large subunit ribosomal RNA (mtLSU rRNA), a universally conserved modification in the peptidyl transferase domain of the mtLSU rRNA. The chain is rRNA methyltransferase 1, mitochondrial from Homo sapiens (Human).